A 248-amino-acid chain; its full sequence is 23S rRNA (guanosine-2'-O-)-methyltransferase RlmB (248 aa).

S-adenosyl-L-methionine contacts are provided by glycine 198, leucine 218, and leucine 227.

It belongs to the class IV-like SAM-binding methyltransferase superfamily. RNA methyltransferase TrmH family. RlmB subfamily.

Its subcellular location is the cytoplasm. The catalysed reaction is guanosine(2251) in 23S rRNA + S-adenosyl-L-methionine = 2'-O-methylguanosine(2251) in 23S rRNA + S-adenosyl-L-homocysteine + H(+). Functionally, specifically methylates the ribose of guanosine 2251 in 23S rRNA. In Pseudomonas aeruginosa (strain ATCC 15692 / DSM 22644 / CIP 104116 / JCM 14847 / LMG 12228 / 1C / PRS 101 / PAO1), this protein is 23S rRNA (guanosine-2'-O-)-methyltransferase RlmB.